Consider the following 429-residue polypeptide: MDRIAIIGGAQLNGTIPVSGAKNSAIKLMAASLLTDEPLRLTNMPRLADTRFLGKLLTRLGVQVTESDGSDGQQTLLHAPEITSGFAPYDLVRQMRASFNVLGPLVARSGQAKVSLPGGCTIGARPVDLHLQAIEALGAKIDLHEGYVYAQAPRGLKGAEIRFPFVSVGATEHAMLAAVLADGVSVIHNAACEPELVDLQECLNAMGAKVEGAGTPTVTITGVPRLHGATHAVIPDRIEMGTYAVAAAMAGGEVRLSNARPGLIDALLDKLKEAGASVEETADGCIIRRNGQRLTAVDIETAPFPGFATDLQAQFMALMTTAKGESRIRETIFENRFMHAPELMRLGADISVSGGEARVRGVDQLEGAQVMATDLRASVSLVIAGLVARGETTVSRIYHLDRGFERLEEKLGACGAQVRRIKGDGEAEL.

Phosphoenolpyruvate is bound at residue 22–23; the sequence is KN. R96 is a binding site for UDP-N-acetyl-alpha-D-glucosamine. C120 (proton donor) is an active-site residue. C120 is modified (2-(S-cysteinyl)pyruvic acid O-phosphothioketal). Residues 125-129, D310, and I332 each bind UDP-N-acetyl-alpha-D-glucosamine; that span reads RPVDL.

The protein belongs to the EPSP synthase family. MurA subfamily.

The protein resides in the cytoplasm. It carries out the reaction phosphoenolpyruvate + UDP-N-acetyl-alpha-D-glucosamine = UDP-N-acetyl-3-O-(1-carboxyvinyl)-alpha-D-glucosamine + phosphate. Its pathway is cell wall biogenesis; peptidoglycan biosynthesis. Its function is as follows. Cell wall formation. Adds enolpyruvyl to UDP-N-acetylglucosamine. The protein is UDP-N-acetylglucosamine 1-carboxyvinyltransferase of Caulobacter vibrioides (strain ATCC 19089 / CIP 103742 / CB 15) (Caulobacter crescentus).